A 389-amino-acid chain; its full sequence is 8-amino-7-oxononanoate synthase (389 aa).

Substrate is bound at residue Arg23. 114 to 115 contributes to the pyridoxal 5'-phosphate binding site; sequence GY. His139 is a substrate binding site. Positions 185, 213, and 242 each coordinate pyridoxal 5'-phosphate. Lys245 is modified (N6-(pyridoxal phosphate)lysine). Thr357 contributes to the substrate binding site.

It belongs to the class-II pyridoxal-phosphate-dependent aminotransferase family. BioF subfamily. As to quaternary structure, homodimer. It depends on pyridoxal 5'-phosphate as a cofactor.

It carries out the reaction 6-carboxyhexanoyl-[ACP] + L-alanine + H(+) = (8S)-8-amino-7-oxononanoate + holo-[ACP] + CO2. Its pathway is cofactor biosynthesis; biotin biosynthesis. In terms of biological role, catalyzes the decarboxylative condensation of pimeloyl-[acyl-carrier protein] and L-alanine to produce 8-amino-7-oxononanoate (AON), [acyl-carrier protein], and carbon dioxide. This chain is 8-amino-7-oxononanoate synthase, found in Acidithiobacillus ferrooxidans (strain ATCC 23270 / DSM 14882 / CIP 104768 / NCIMB 8455) (Ferrobacillus ferrooxidans (strain ATCC 23270)).